A 317-amino-acid chain; its full sequence is tRNA dimethylallyltransferase (317 aa).

19–26 (GPTASGKS) provides a ligand contact to ATP. Substrate is bound at residue 21-26 (TASGKS). An interaction with substrate tRNA region spans residues 44–47 (DSMQ).

Belongs to the IPP transferase family. In terms of assembly, monomer. The cofactor is Mg(2+).

It carries out the reaction adenosine(37) in tRNA + dimethylallyl diphosphate = N(6)-dimethylallyladenosine(37) in tRNA + diphosphate. In terms of biological role, catalyzes the transfer of a dimethylallyl group onto the adenine at position 37 in tRNAs that read codons beginning with uridine, leading to the formation of N6-(dimethylallyl)adenosine (i(6)A). This Methylorubrum extorquens (strain PA1) (Methylobacterium extorquens) protein is tRNA dimethylallyltransferase.